The following is a 1203-amino-acid chain: DNA-directed RNA polymerase subunit beta (1203 aa).

The span at 1174–1195 shows a compositional bias: basic and acidic residues; it reads AAQEAKAAFEAEEAEKATKAEA. Positions 1174–1203 are disordered; sequence AAQEAKAAFEAEEAEKATKAEATEEAAEQE.

Belongs to the RNA polymerase beta chain family. As to quaternary structure, the RNAP catalytic core consists of 2 alpha, 1 beta, 1 beta' and 1 omega subunit. When a sigma factor is associated with the core the holoenzyme is formed, which can initiate transcription.

It catalyses the reaction RNA(n) + a ribonucleoside 5'-triphosphate = RNA(n+1) + diphosphate. DNA-dependent RNA polymerase catalyzes the transcription of DNA into RNA using the four ribonucleoside triphosphates as substrates. This chain is DNA-directed RNA polymerase subunit beta, found in Streptococcus pneumoniae (strain ATCC 700669 / Spain 23F-1).